Reading from the N-terminus, the 246-residue chain is Putative pectinesterase 57 (246 aa).

Residues Asn127 and Asn143 are each glycosylated (N-linked (GlcNAc...) asparagine). Thr152 serves as a coordination point for substrate. A glycan (N-linked (GlcNAc...) asparagine) is linked at Asn174. Residue Asp205 is the Proton donor of the active site. Asp226 acts as the Nucleophile in catalysis.

This sequence belongs to the pectinesterase family.

The enzyme catalyses [(1-&gt;4)-alpha-D-galacturonosyl methyl ester](n) + n H2O = [(1-&gt;4)-alpha-D-galacturonosyl](n) + n methanol + n H(+). The protein operates within glycan metabolism; pectin degradation; 2-dehydro-3-deoxy-D-gluconate from pectin: step 1/5. Its function is as follows. Acts in the modification of cell walls via demethylesterification of cell wall pectin. The protein is Putative pectinesterase 57 (PME57) of Arabidopsis thaliana (Mouse-ear cress).